The following is an 89-amino-acid chain: DNA-directed RNA polymerase subunit omega (89 aa).

The protein belongs to the RNA polymerase subunit omega family. In terms of assembly, the RNAP catalytic core consists of 2 alpha, 1 beta, 1 beta' and 1 omega subunit. When a sigma factor is associated with the core the holoenzyme is formed, which can initiate transcription.

The catalysed reaction is RNA(n) + a ribonucleoside 5'-triphosphate = RNA(n+1) + diphosphate. Promotes RNA polymerase assembly. Latches the N- and C-terminal regions of the beta' subunit thereby facilitating its interaction with the beta and alpha subunits. The protein is DNA-directed RNA polymerase subunit omega of Clavibacter michiganensis subsp. michiganensis (strain NCPPB 382).